The following is a 512-amino-acid chain: FACT complex subunit pob3 (512 aa).

Residues 460–504 (LDDEDEEGDEEMEEALSEDEDFQAESESDVAEEYDENAESSDEEG) are compositionally biased toward acidic residues. The disordered stretch occupies residues 460-512 (LDDEDEEGDEEMEEALSEDEDFQAESESDVAEEYDENAESSDEEGASGAEGSE).

The protein belongs to the SSRP1 family. As to quaternary structure, forms a stable heterodimer with spt16. The spt16-pob3 dimer weakly associates with multiple molecules of nhp6 to form the FACT complex. Interacts with abo1.

Its subcellular location is the nucleus. It localises to the chromosome. Functionally, component of the FACT complex, a general chromatin factor that acts to reorganize nucleosomes. The FACT complex is involved in multiple processes that require DNA as a template such as mRNA elongation, DNA replication and DNA repair. During transcription elongation the FACT complex acts as a histone chaperone that both destabilizes and restores nucleosomal structure. It facilitates the passage of RNA polymerase II and transcription by promoting the dissociation of one histone H2A-H2B dimer from the nucleosome, then subsequently promotes the reestablishment of the nucleosome following the passage of RNA polymerase II. This chain is FACT complex subunit pob3, found in Schizosaccharomyces pombe (strain 972 / ATCC 24843) (Fission yeast).